The primary structure comprises 379 residues: MEVKPPPGRPQPDSGRRRRRRGEEGHDPKEPEQLRKLFIGGLSFETTDDSLREHFEKWGTLTDCVVMRDPQTKRSRGFGFVTYSCVEEVDAAMCARPHKVDGRVVEPKRAVSREDSVKPGAHLTVKKIFVGGIKEDTEEYNLRDYFEKYGKIETIEVMEDRQSGKKRGFAFVTFDDHDTVDKIVVQKYHTINGHNCEVKKALSKQEMQSAGSQRGRGGGSGNFMGRGGNFGGGGGNFGRGGNFGGRGGYGGGGGGSRGSYGGGDGGYNGFGGDGGNYGGGPGYSSRGGYGGGGPGYGNQGGGYGGGGGGYDGYNEGGNFGGGNYGGGGNYNDFGNYSGQQQSNYGPMKGGSFGGRSSGSPYGGGYGSGGGSGGYGSRRF.

Methionine 1 carries the post-translational modification N-acetylmethionine. Positions 1 to 10 (MEVKPPPGRP) are enriched in pro residues. Residues 1–34 (MEVKPPPGRPQPDSGRRRRRRGEEGHDPKEPEQL) are disordered. Lysine 4 is covalently cross-linked (Glycyl lysine isopeptide (Lys-Gly) (interchain with G-Cter in SUMO2)). Serine 14 bears the Phosphoserine mark. The span at 21-34 (RGEEGHDPKEPEQL) shows a compositional bias: basic and acidic residues. Residues 35-118 (RKLFIGGLSF…RAVSREDSVK (84 aa)) form the RRM 1 domain. Lysine 36 is covalently cross-linked (Glycyl lysine isopeptide (Lys-Gly) (interchain with G-Cter in SUMO2)). At serine 43 the chain carries Phosphoserine. Arginine 52 is subject to Dimethylated arginine; alternate. At arginine 52 the chain carries Omega-N-methylarginine; alternate. Omega-N-methylarginine is present on arginine 76. 2 positions are modified to phosphoserine: serine 112 and serine 116. A Glycyl lysine isopeptide (Lys-Gly) (interchain with G-Cter in SUMO2) cross-link involves residue lysine 118. Threonine 124 carries the post-translational modification Phosphothreonine. An RRM 2 domain is found at 126 to 205 (KKIFVGGIKE…CEVKKALSKQ (80 aa)). Lysine 134 carries the post-translational modification N6-acetyllysine; alternate. Lysine 134 participates in a covalent cross-link: Glycyl lysine isopeptide (Lys-Gly) (interchain with G-Cter in SUMO2); alternate. Glycyl lysine isopeptide (Lys-Gly) (interchain with G-Cter in SUMO2) cross-links involve residues lysine 151 and lysine 182. A disordered region spans residues 204 to 225 (KQEMQSAGSQRGRGGGSGNFMG). An omega-N-methylarginine; alternate mark is found at arginine 214, arginine 216, arginine 226, arginine 239, and arginine 246. Residues arginine 214, arginine 216, arginine 226, arginine 239, and arginine 246 each carry the asymmetric dimethylarginine; alternate modification. Gly residues predominate over residues 214–225 (RGRGGGSGNFMG). Position 257 is an omega-N-methylarginine (arginine 257). Position 286 is an asymmetric dimethylarginine (arginine 286). Residues 335-379 (NYSGQQQSNYGPMKGGSFGGRSSGSPYGGGYGSGGGSGGYGSRRF) form a disordered region. Over residues 347 to 379 (MKGGSFGGRSSGSPYGGGYGSGGGSGGYGSRRF) the composition is skewed to gly residues. Position 351 is a phosphoserine (serine 351). Position 355 is an omega-N-methylarginine (arginine 355). Position 359 is a phosphoserine (serine 359). Tyrosine 361 and tyrosine 365 each carry phosphotyrosine. 2 positions are modified to phosphoserine: serine 367 and serine 371. At tyrosine 374 the chain carries Phosphotyrosine. Serine 376 is subject to Phosphoserine.

Identified in the spliceosome C complex.

The protein localises to the nucleus. In terms of biological role, plays a role in cytoplasmic trafficking of RNA. Binds to the cis-acting response element, A2RE. May be involved in pre-mRNA splicing. The polypeptide is Heterogeneous nuclear ribonucleoprotein A3 (Hnrnpa3) (Mus musculus (Mouse)).